The primary structure comprises 100 residues: Small ribosomal subunit protein uS14c (100 aa).

This sequence belongs to the universal ribosomal protein uS14 family. In terms of assembly, part of the 30S ribosomal subunit.

Its subcellular location is the plastid. The protein resides in the chloroplast. In terms of biological role, binds 16S rRNA, required for the assembly of 30S particles. In Calycanthus floridus var. glaucus (Eastern sweetshrub), this protein is Small ribosomal subunit protein uS14c.